A 356-amino-acid chain; its full sequence is MNIPHYSLETLAHLVQGELFGDEHFNLSGLASLEQAQSHHISFVNGEKYVEAAKQSKAGALIVTSAFKDQLPASQNYIVVKNPYLAFAQLTHVFEKKMTQRGIESTAKIHPSAMIADNAYIGHYVIIGAECVVGENTVILAHSFLGDNVEIGRDGFVESNVSLLQGTKIKDRVRIHANTVIGSEGFGFAPYQGKWHRIVQLGTVQIGHDVRIGSNCSIDRGALDDTIIEDGVIIDNLVQIAHNVRIGSNTAIAAKCGIAGSTVIGKNCILAGACGVVGHITITDNVTLTGMSMVTKSISEAGTYSSGTALMENNQWKRTIVRFRQLADVPLTQIMKRLDHIQTQIESLESTFKLRK.

Catalysis depends on H242, which acts as the Proton acceptor.

This sequence belongs to the transferase hexapeptide repeat family. LpxD subfamily. In terms of assembly, homotrimer.

It catalyses the reaction a UDP-3-O-[(3R)-3-hydroxyacyl]-alpha-D-glucosamine + a (3R)-hydroxyacyl-[ACP] = a UDP-2-N,3-O-bis[(3R)-3-hydroxyacyl]-alpha-D-glucosamine + holo-[ACP] + H(+). It functions in the pathway bacterial outer membrane biogenesis; LPS lipid A biosynthesis. In terms of biological role, catalyzes the N-acylation of UDP-3-O-acylglucosamine using 3-hydroxyacyl-ACP as the acyl donor. Is involved in the biosynthesis of lipid A, a phosphorylated glycolipid that anchors the lipopolysaccharide to the outer membrane of the cell. The protein is UDP-3-O-acylglucosamine N-acyltransferase of Acinetobacter baylyi (strain ATCC 33305 / BD413 / ADP1).